The chain runs to 181 residues: Der GTPase-activating protein YihI (181 aa).

2 disordered regions span residues 1–75 and 145–181; these read MSRK…KKIP and EPEAEEEFEDEAPVRKSRSDDDLLADFEDFDMDDYKG. Basic residues predominate over residues 32 to 43; it reads RLRKKDKKRKGL. A compositionally biased stretch (acidic residues) spans 146 to 155; it reads PEAEEEFEDE. Over residues 156 to 165 the composition is skewed to basic and acidic residues; the sequence is APVRKSRSDD. Residues 166–181 are compositionally biased toward acidic residues; the sequence is DLLADFEDFDMDDYKG.

It belongs to the YihI family. Interacts with Der.

Its function is as follows. A GTPase-activating protein (GAP) that modifies Der/EngA GTPase function. May play a role in ribosome biogenesis. The polypeptide is Der GTPase-activating protein YihI (Vibrio vulnificus (strain YJ016)).